A 416-amino-acid polypeptide reads, in one-letter code: Serine hydroxymethyltransferase (416 aa).

Residues Leu119 and 123–125 each bind (6S)-5,6,7,8-tetrahydrofolate; that span reads GHL. Lys228 bears the N6-(pyridoxal phosphate)lysine mark.

This sequence belongs to the SHMT family. As to quaternary structure, homodimer. The cofactor is pyridoxal 5'-phosphate.

It is found in the cytoplasm. The enzyme catalyses (6R)-5,10-methylene-5,6,7,8-tetrahydrofolate + glycine + H2O = (6S)-5,6,7,8-tetrahydrofolate + L-serine. The protein operates within one-carbon metabolism; tetrahydrofolate interconversion. It functions in the pathway amino-acid biosynthesis; glycine biosynthesis; glycine from L-serine: step 1/1. Its function is as follows. Catalyzes the reversible interconversion of serine and glycine with tetrahydrofolate (THF) serving as the one-carbon carrier. This reaction serves as the major source of one-carbon groups required for the biosynthesis of purines, thymidylate, methionine, and other important biomolecules. Also exhibits THF-independent aldolase activity toward beta-hydroxyamino acids, producing glycine and aldehydes, via a retro-aldol mechanism. The sequence is that of Serine hydroxymethyltransferase from Moorella thermoacetica (strain ATCC 39073 / JCM 9320).